A 119-amino-acid chain; its full sequence is uncharacterized protein (119 aa).

Cysteines 9 and 12 form a disulfide.

It belongs to the ArsC family.

This is an uncharacterized protein from Streptomyces viridochromogenes.